A 143-amino-acid chain; its full sequence is Large ribosomal subunit protein uL11 (143 aa).

Belongs to the universal ribosomal protein uL11 family. Part of the ribosomal stalk of the 50S ribosomal subunit. Interacts with L10 and the large rRNA to form the base of the stalk. L10 forms an elongated spine to which L12 dimers bind in a sequential fashion forming a multimeric L10(L12)X complex. Post-translationally, one or more lysine residues are methylated.

In terms of biological role, forms part of the ribosomal stalk which helps the ribosome interact with GTP-bound translation factors. In Psychrobacter cryohalolentis (strain ATCC BAA-1226 / DSM 17306 / VKM B-2378 / K5), this protein is Large ribosomal subunit protein uL11.